The following is a 1051-amino-acid chain: Lateral signaling target protein 2 homolog (1051 aa).

Disordered stretches follow at residues 305 to 440, 516 to 552, 566 to 703, and 837 to 968; these read PLGS…DEDL, GSNA…PSTS, HLPS…NASS, and IDLA…DGKA. Positions 319-358 are enriched in low complexity; the sequence is NNTSSSTSNNNNNNNNNSSSSSSSSSGSGSNTAKTSTSST. Residues 360–370 are compositionally biased toward basic and acidic residues; it reads KAVERLVDHRN. Over residues 371–391 the composition is skewed to polar residues; the sequence is NNSSTVAGATQPSTARSPSML. 2 stretches are compositionally biased toward low complexity: residues 392 to 401 and 409 to 428; these read SLSAGSTPTA and PSHS…NPPA. Over residues 518–528 the composition is skewed to polar residues; the sequence is NAATERQQQQQ. Composition is skewed to low complexity over residues 533-549 and 568-582; these read LQPG…QDEP and PSSS…SSNQ. Residues Ser569 and Ser570 each carry the phosphoserine modification. Positions 583 to 596 are enriched in polar residues; it reads QTTIKTPNGNQSMP. Over residues 597 to 606 the composition is skewed to low complexity; it reads NSSSSSSNHN. Basic residues-rich tracts occupy residues 607–637 and 650–672; these read NNRH…HPHH and HHHH…ARKR. Positions 692–703 are enriched in polar residues; sequence TPGSADTSNASS. Low complexity predominate over residues 840–852; the sequence is ASGNNNGNSNAAA. Ser861 is subject to Phosphoserine. Low complexity-rich tracts occupy residues 879-924 and 937-960; these read QQQQ…SPIS and SSIG…MSPP. Residues 965 to 1025 form an FYVE-type zinc finger; the sequence is DGKAPRCMSC…VCRECYVREV (61 aa). Residues Cys971, Cys974, Cys987, Cys990, Cys995, Cys998, Cys1017, and Cys1020 each coordinate Zn(2+). Residues 1028-1051 form a disordered region; the sequence is SRQAPAQPSQAHGQASRPQAASAS.

This sequence belongs to the lst-2 family.

In terms of biological role, negative regulator of epidermal growth factor receptor (EGFR) signaling. The sequence is that of Lateral signaling target protein 2 homolog from Drosophila mojavensis (Fruit fly).